The sequence spans 459 residues: MSLRIYNTLSRELEEFSPLQPGRVRMYVCGMTVYDLCHLGHARSMIAFDLVQRWLKASGLAVTYVRNITDIDDKIIRRAVENGETIRSLTDRMIDALHEDADALGIERPTHEPRATDYIPQMLSMIGTLEKKGLAYRAENGDVNYAVRKFPGYGKLSGKSIDELHAGERVAVLDGKDDPLDPVLWKSAKPSEPEEVKWASEFGPGRPGWHIECSAMACELLGETLDIHGGGEDLQFPHHENEIAQSEGATGKPLANYWMHNGFIVTDNEKMSKSLGNFFLIRDVLKKYDAETIRFFVVRAHYRRPLNYSDVHLDDARASLKRLYTSLDLVAPQALAAIDWNDPYAARFKAAMDEDFATPEAVAVLFDLAGEVNRTQSPAQAGLLKALGGCLNILQDDPKRFLRAGTTLDEATIQAQIDARAAAKAAKNFAEADRIRNDLLAQGIVLKDSPTGTTWAAAQ.

Cys-29 lines the Zn(2+) pocket. The 'HIGH' region motif lies at 31-41 (MTVYDLCHLGH). Zn(2+) is bound by residues Cys-213, His-238, and Glu-242. The short motif at 270–274 (KMSKS) is the 'KMSKS' region element. Lys-273 is an ATP binding site.

Belongs to the class-I aminoacyl-tRNA synthetase family. In terms of assembly, monomer. It depends on Zn(2+) as a cofactor.

Its subcellular location is the cytoplasm. The catalysed reaction is tRNA(Cys) + L-cysteine + ATP = L-cysteinyl-tRNA(Cys) + AMP + diphosphate. This chain is Cysteine--tRNA ligase, found in Variovorax paradoxus (strain S110).